The chain runs to 163 residues: MHCPFCAYADTRVVDSRLADDGGSVRRRRECPQCGQRFTTFERAELALPVVVKTDGRRESFNEEKLQRGLTRALSKRPVATARVDAAVRMIQRRIRERGEREIPARLIGELVMEALRDLDPVAYVRFASVYRRFEDVDAFSVEIARMKEAEVPDGGDDLNRGD.

A zinc finger lies at 3–34 (CPFCAYADTRVVDSRLADDGGSVRRRRECPQC). One can recognise an ATP-cone domain in the interval 49–139 (PVVVKTDGRR…VYRRFEDVDA (91 aa)).

The protein belongs to the NrdR family. The cofactor is Zn(2+).

Functionally, negatively regulates transcription of bacterial ribonucleotide reductase nrd genes and operons by binding to NrdR-boxes. In Acidithiobacillus ferrooxidans (strain ATCC 23270 / DSM 14882 / CIP 104768 / NCIMB 8455) (Ferrobacillus ferrooxidans (strain ATCC 23270)), this protein is Transcriptional repressor NrdR.